The chain runs to 206 residues: LexA repressor (206 aa).

Positions 28–48 (RAEIATRLGFKSANAAEEHLK) form a DNA-binding region, H-T-H motif. Active-site for autocatalytic cleavage activity residues include S123 and K160.

This sequence belongs to the peptidase S24 family. As to quaternary structure, homodimer.

It catalyses the reaction Hydrolysis of Ala-|-Gly bond in repressor LexA.. In terms of biological role, represses a number of genes involved in the response to DNA damage (SOS response), including recA and lexA. In the presence of single-stranded DNA, RecA interacts with LexA causing an autocatalytic cleavage which disrupts the DNA-binding part of LexA, leading to derepression of the SOS regulon and eventually DNA repair. The protein is LexA repressor of Shewanella baltica (strain OS223).